Reading from the N-terminus, the 701-residue chain is Elongation factor G (701 aa).

Positions 6–286 (KFTRNIGIAA…YVMELLPSPL (281 aa)) constitute a tr-type G domain. GTP-binding positions include 15 to 22 (AHIDAGKT), 83 to 87 (DTPGH), and 137 to 140 (NKMD).

It belongs to the TRAFAC class translation factor GTPase superfamily. Classic translation factor GTPase family. EF-G/EF-2 subfamily.

It is found in the cytoplasm. Catalyzes the GTP-dependent ribosomal translocation step during translation elongation. During this step, the ribosome changes from the pre-translocational (PRE) to the post-translocational (POST) state as the newly formed A-site-bound peptidyl-tRNA and P-site-bound deacylated tRNA move to the P and E sites, respectively. Catalyzes the coordinated movement of the two tRNA molecules, the mRNA and conformational changes in the ribosome. The polypeptide is Elongation factor G (Cytophaga hutchinsonii (strain ATCC 33406 / DSM 1761 / CIP 103989 / NBRC 15051 / NCIMB 9469 / D465)).